The following is a 294-amino-acid chain: Elongation factor Ts (294 aa).

The interval T80–V83 is involved in Mg(2+) ion dislocation from EF-Tu.

The protein belongs to the EF-Ts family.

It is found in the cytoplasm. In terms of biological role, associates with the EF-Tu.GDP complex and induces the exchange of GDP to GTP. It remains bound to the aminoacyl-tRNA.EF-Tu.GTP complex up to the GTP hydrolysis stage on the ribosome. In Listeria monocytogenes serovar 1/2a (strain ATCC BAA-679 / EGD-e), this protein is Elongation factor Ts.